The following is a 557-amino-acid chain: Protein PECTIC ARABINOGALACTAN SYNTHESIS-RELATED (557 aa).

The segment at 1–54 (MAELRHSSSLGSRSSSSPLRAAGDEDSSSPHVHDHSPNGGDDEDGRPRHPSRDR) is disordered. Residues 1–79 (MAELRHSSSL…DPRVSPQKNK (79 aa)) are Cytoplasmic-facing. Positions 7-20 (SSSLGSRSSSSPLR) are enriched in low complexity. Basic and acidic residues predominate over residues 45-54 (GRPRHPSRDR). A helical; Signal-anchor for type II membrane protein membrane pass occupies residues 80–100 (ISLLLILILAIASLISVYGII). Topologically, residues 101–557 (NHLNAPYLCK…NPLTPCMCKA (457 aa)) are lumenal. N156, N188, and N324 each carry an N-linked (GlcNAc...) asparagine glycan. Residue 336-338 (HLR) participates in substrate binding. N375 carries N-linked (GlcNAc...) asparagine glycosylation.

Belongs to the glycosyltransferase GT106 family. As to expression, widely expressed with the highest expression in reproductive tissues and roots.

The protein resides in the golgi apparatus membrane. It participates in glycan metabolism; pectin biosynthesis. Functionally, glycosyltransferase involved in the biosynthesis of pectic type-II arabinogalactans. The protein is Protein PECTIC ARABINOGALACTAN SYNTHESIS-RELATED of Arabidopsis thaliana (Mouse-ear cress).